The chain runs to 164 residues: NADH-quinone oxidoreductase subunit I 2 (164 aa).

2 4Fe-4S ferredoxin-type domains span residues 39-71 and 81-110; these read IVLT…VVKA and ESFR…LTPD. Cysteine 51, cysteine 54, cysteine 57, cysteine 61, cysteine 90, cysteine 93, cysteine 96, and cysteine 100 together coordinate [4Fe-4S] cluster.

The protein belongs to the complex I 23 kDa subunit family. In terms of assembly, NDH-1 is composed of 14 different subunits. Subunits NuoA, H, J, K, L, M, N constitute the membrane sector of the complex. [4Fe-4S] cluster serves as cofactor.

It is found in the cell inner membrane. It catalyses the reaction a quinone + NADH + 5 H(+)(in) = a quinol + NAD(+) + 4 H(+)(out). In terms of biological role, NDH-1 shuttles electrons from NADH, via FMN and iron-sulfur (Fe-S) centers, to quinones in the respiratory chain. The immediate electron acceptor for the enzyme in this species is believed to be ubiquinone. Couples the redox reaction to proton translocation (for every two electrons transferred, four hydrogen ions are translocated across the cytoplasmic membrane), and thus conserves the redox energy in a proton gradient. The polypeptide is NADH-quinone oxidoreductase subunit I 2 (Cereibacter sphaeroides (strain ATCC 17023 / DSM 158 / JCM 6121 / CCUG 31486 / LMG 2827 / NBRC 12203 / NCIMB 8253 / ATH 2.4.1.) (Rhodobacter sphaeroides)).